The following is a 225-amino-acid chain: Ribonuclease 3 (225 aa).

The RNase III domain maps to 7–129 (IPRLCRTLGY…IIGAIYLDSE (123 aa)). Glutamate 42 serves as a coordination point for Mg(2+). The active site involves aspartate 46. Aspartate 115 and glutamate 118 together coordinate Mg(2+). Glutamate 118 is a catalytic residue. In terms of domain architecture, DRBM spans 155-225 (DPKTLLQEHL…AAQVLELMKK (71 aa)).

It belongs to the ribonuclease III family. As to quaternary structure, homodimer. Mg(2+) serves as cofactor.

The protein localises to the cytoplasm. The enzyme catalyses Endonucleolytic cleavage to 5'-phosphomonoester.. In terms of biological role, digests double-stranded RNA. Involved in the processing of primary rRNA transcript to yield the immediate precursors to the large and small rRNAs (23S and 16S). Processes some mRNAs, and tRNAs when they are encoded in the rRNA operon. Processes pre-crRNA and tracrRNA of type II CRISPR loci if present in the organism. The polypeptide is Ribonuclease 3 (Shewanella halifaxensis (strain HAW-EB4)).